Here is a 140-residue protein sequence, read N- to C-terminus: Large ribosomal subunit protein uL11 (140 aa).

It belongs to the universal ribosomal protein uL11 family. As to quaternary structure, part of the ribosomal stalk of the 50S ribosomal subunit. Interacts with L10 and the large rRNA to form the base of the stalk. L10 forms an elongated spine to which L12 dimers bind in a sequential fashion forming a multimeric L10(L12)X complex. Post-translationally, one or more lysine residues are methylated.

Functionally, forms part of the ribosomal stalk which helps the ribosome interact with GTP-bound translation factors. This is Large ribosomal subunit protein uL11 from Nitratidesulfovibrio vulgaris (strain DSM 19637 / Miyazaki F) (Desulfovibrio vulgaris).